The primary structure comprises 243 residues: 3,4-dihydroxyphthalate decarboxylase (243 aa).

E86 serves as the catalytic Proton donor/acceptor. A divalent metal cation-binding residues include E86, H105, H107, and H173.

It belongs to the aldolase class II family. Requires a divalent metal cation as cofactor.

It carries out the reaction 3,4-dihydroxyphthalate + H(+) = 3,4-dihydroxybenzoate + CO2. It functions in the pathway xenobiotic degradation; phthalate degradation. Functionally, catalyzes the decarboxylation of 3,4-dihydroxyphthalate to protocatechuate (3,4-dihydroxybenzoate) during phthalate metabolism. This is 3,4-dihydroxyphthalate decarboxylase from Rhodococcus jostii (strain RHA1).